The primary structure comprises 384 residues: Urotensin-2 receptor (384 aa).

Residues 1–54 lie on the Extracellular side of the membrane; it reads MALSPEPSSRFLVPATMGSAMPELPGAPNASLNSSLASPTEPNSLEDLVATGTI. Residues Asn-29 and Asn-33 are each glycosylated (N-linked (GlcNAc...) asparagine). The chain crosses the membrane as a helical span at residues 55-77; that stretch reads GVVLSAMGVVGMAGNVYTLTVMC. Topologically, residues 78 to 87 are cytoplasmic; that stretch reads RFLHTSASMY. Residues 88 to 113 form a helical membrane-spanning segment; that stretch reads VYVINLALADLLYLLSIPFIVATYVT. Residues 114–124 lie on the Extracellular side of the membrane; it reads KRWHFGDVGCR. Cysteines 123 and 199 form a disulfide. Residues 125-146 form a helical membrane-spanning segment; the sequence is VLFSLDFLTMHASIFTLTLMSR. At 147-167 the chain is on the cytoplasmic side; sequence ERYAAVVRPLDTVQRSKGYRK. Residues 168–186 traverse the membrane as a helical segment; sequence VLALGTWLLALLLALPMML. Residues 187-209 lie on the Extracellular side of the membrane; that stretch reads AIRLVRRGHKSLCLPAWGQRTHR. Residues 210–232 form a helical membrane-spanning segment; sequence AYLTLLFGTSIVGPGVVIGLLYV. The Cytoplasmic segment spans residues 233-259; that stretch reads RLARAYWLSQRSSFTQTRRLPNPRVLY. Residues 260 to 285 traverse the membrane as a helical segment; it reads LILGIVLLFWACFLPFWLWQLLAQYR. Residues 286–299 are Extracellular-facing; sequence GAPPLAPRSARIVN. Residues 300–320 form a helical membrane-spanning segment; the sequence is YLTTCLTYGNSCVNPFLYTLL. Over 321 to 384 the chain is Cytoplasmic; the sequence is TKNYRDYRQR…SQAVPGSLCV (64 aa).

It belongs to the G-protein coupled receptor 1 family. In terms of tissue distribution, expressed in neural tissue, including sensory epithelia.

The protein localises to the cell membrane. In terms of biological role, high affinity receptor for urotensin-2 and urotensin-2B. The activity of this receptor is mediated by a G-protein that activate a phosphatidylinositol-calcium second messenger system. This Bos taurus (Bovine) protein is Urotensin-2 receptor (UTS2R).